The sequence spans 1310 residues: PAN2-PAN3 deadenylation complex catalytic subunit pan2 (1310 aa).

WD repeat units follow at residues 22 to 61 (YHAG…RFTA), 67 to 105 (ETDG…SIRH), 106 to 144 (ESMQ…GEVV), and 145 to 184 (KELP…IKKQ). Residues 318-463 (QFTEIGIPPR…NNDHWSLRPE (146 aa)) are linker. In terms of domain architecture, USP spans 463 to 850 (EAPPEYRICE…MPVVVMFQVK (388 aa)). H525, C530, C535, C538, C645, C648, C700, and C703 together coordinate Zn(2+). Residues 897 to 1070 (IAIDTEFIRL…EDAQTALKLY (174 aa)) form the Exonuclease domain. 4 residues coordinate a divalent metal cation: D900, E902, D1009, and D1062. The segment at 1121 to 1169 (TPPVPAPGTTEGSFEISNSSTATTGGSALSATGGMGSASASSSMPSTPV) is disordered. Residues 1139-1168 (SSTATTGGSALSATGGMGSASASSSMPSTP) show a composition bias toward low complexity.

Belongs to the peptidase C19 family. PAN2 subfamily. Forms a heterotrimer with an asymmetric homodimer of the regulatory subunit par-2/pan3 to form the poly(A)-nuclease (PAN) deadenylation complex. The cofactor is a divalent metal cation.

Its subcellular location is the cytoplasm. The enzyme catalyses Exonucleolytic cleavage of poly(A) to 5'-AMP.. With respect to regulation, positively regulated by the regulatory subunit par-2/pan3. Catalytic subunit of the poly(A)-nuclease (PAN) deadenylation complex, one of two cytoplasmic mRNA deadenylases involved in mRNA turnover. PAN specifically shortens poly(A) tails of RNA and the activity is stimulated by poly(A)-binding protein pabp-1. PAN deadenylation is followed by rapid degradation of the shortened mRNA tails by the CCR4-NOT complex. Deadenylated mRNAs are then degraded by two alternative mechanisms, namely exosome-mediated 3'-5' exonucleolytic degradation, or deadenylation-dependent mRNA decaping and subsequent 5'-3' exonucleolytic degradation by rgb-30/xrn1. May also be involved in post-transcriptional maturation of mRNA poly(A) tails. This is PAN2-PAN3 deadenylation complex catalytic subunit pan2 (par-1) from Neurospora crassa (strain ATCC 24698 / 74-OR23-1A / CBS 708.71 / DSM 1257 / FGSC 987).